Reading from the N-terminus, the 280-residue chain is Lysosome-associated membrane glycoprotein 5 (280 aa).

A signal peptide spans 1–29; that stretch reads MDLQGRGVPSIDRLRVLLMLFHTMAQIMA. The Extracellular portion of the chain corresponds to 30–235; sequence EQEVENLSGL…PVDEREQLEE (206 aa). 3 N-linked (GlcNAc...) asparagine glycosylation sites follow: asparagine 35, asparagine 53, and asparagine 127. Residues 236 to 256 form a helical membrane-spanning segment; sequence TLPLILGLILGLVIMVTLAIY. Topologically, residues 257-280 are cytoplasmic; sequence HVHHKMTANQVQIPRDRSQYKHMG.

The protein belongs to the LAMP family. Post-translationally, glycosylated. As to expression, expressed in plasmocytoid dendritic cells. Expressed in suprabasal skin keratinocytes and squamous cells (at protein level). Expressed in the brain and weakly in spleen and skin. Expressed in plasmocytoid dendritic cells.

It is found in the cell membrane. The protein resides in the cytoplasmic vesicle. It localises to the secretory vesicle. The protein localises to the synaptic vesicle membrane. Its subcellular location is the endoplasmic reticulum-Golgi intermediate compartment membrane. It is found in the endosome membrane. The protein resides in the cytoplasmic vesicle membrane. It localises to the cell projection. The protein localises to the dendrite. Its subcellular location is the growth cone membrane. It is found in the early endosome membrane. The protein resides in the recycling endosome. Functionally, plays a role in short-term synaptic plasticity in a subset of GABAergic neurons in the brain. This chain is Lysosome-associated membrane glycoprotein 5 (LAMP5), found in Homo sapiens (Human).